The chain runs to 233 residues: Probable chemoreceptor glutamine deamidase CheD (233 aa).

Belongs to the CheD family.

The enzyme catalyses L-glutaminyl-[protein] + H2O = L-glutamyl-[protein] + NH4(+). In terms of biological role, probably deamidates glutamine residues to glutamate on methyl-accepting chemotaxis receptors (MCPs), playing an important role in chemotaxis. The protein is Probable chemoreceptor glutamine deamidase CheD of Ralstonia nicotianae (strain ATCC BAA-1114 / GMI1000) (Ralstonia solanacearum).